The following is a 111-amino-acid chain: Ribulose bisphosphate carboxylase small subunit (111 aa).

The protein belongs to the RuBisCO small chain family. In terms of assembly, heterohexadecamer of 8 large and 8 small subunits. The CcmM short form purifies from carboxysomes in complex with both RuBisCO subunits; a second complex with full-length CcmM and RuBisCO also includes carbonic anhydrase (CA, ccaA). RuBisCO-CcmM complexes are probably associated with the carboxysome shell. Isolated reduced and oxidized SSUL1 binds holo-RuBisCO (RbcL(8)-RbcS(8)) but not either subunit octamer alone; RuBisCO has a higher affinity for reduced SSUL1.

The protein localises to the carboxysome. In terms of biological role, ruBisCO catalyzes two reactions: the carboxylation of D-ribulose 1,5-bisphosphate, the primary event in carbon dioxide fixation, as well as the oxidative fragmentation of the pentose substrate in the photorespiration process. Both reactions occur simultaneously and in competition at the same active site. Its function is as follows. Beta-carboxysome assembly initiates when soluble RuBisCO aggregates is condensed into a liquid matrix in a pre-carboxysome by the RbcS-like domains of probably both CcmM58 and CcmM35. CcmN interacts with the N-terminus of CcmM58, and then recruits the CcmK2 major shell protein via CcmN's encapsulation peptide. Shell formation requires CcmK proteins and CcmO. CcmL caps the otherwise elongated carboxysome. Once fully encapsulated carboxysomes are formed, they migrate within the cell probably via interactions with the cytoskeleton. The polypeptide is Ribulose bisphosphate carboxylase small subunit (Synechococcus elongatus (strain ATCC 33912 / PCC 7942 / FACHB-805) (Anacystis nidulans R2)).